The following is a 145-amino-acid chain: uncharacterized protein (145 aa).

The signal sequence occupies residues 1–23; that stretch reads MSSSNLSSRKTRISAHFLDAAPA. A helical transmembrane segment spans residues 123–140; that stretch reads VLLLIIALVFLLFVAIFI.

The protein resides in the membrane. This is an uncharacterized protein from Archaeoglobus fulgidus (strain ATCC 49558 / DSM 4304 / JCM 9628 / NBRC 100126 / VC-16).